The primary structure comprises 556 residues: Non-structural maintenance of chromosome element 5 (556 aa).

Component of the Smc5-Smc6 complex which consists of KRE29, MMS21, NSE1, NSE3, NSE4, NSE5, SMC5 and SMC6. Interacts with KRE29.

Its subcellular location is the nucleus. The protein localises to the chromosome. In terms of biological role, acts in a DNA repair pathway for removal of UV-induced DNA damage that is distinct from classical nucleotide excision repair and in repair of ionizing radiation damage. Functions in homologous recombination repair of DNA double strand breaks and in recovery of stalled replication forks. The chain is Non-structural maintenance of chromosome element 5 (NSE5) from Saccharomyces cerevisiae (strain ATCC 204508 / S288c) (Baker's yeast).